A 134-amino-acid polypeptide reads, in one-letter code: ATP synthase epsilon chain, chloroplastic (134 aa).

It belongs to the ATPase epsilon chain family. As to quaternary structure, F-type ATPases have 2 components, CF(1) - the catalytic core - and CF(0) - the membrane proton channel. CF(1) has five subunits: alpha(3), beta(3), gamma(1), delta(1), epsilon(1). CF(0) has three main subunits: a, b and c.

The protein resides in the plastid. It localises to the chloroplast thylakoid membrane. Produces ATP from ADP in the presence of a proton gradient across the membrane. This is ATP synthase epsilon chain, chloroplastic from Pelargonium hortorum (Common geranium).